Here is a 645-residue protein sequence, read N- to C-terminus: 1-deoxy-D-xylulose-5-phosphate synthase 1 (645 aa).

Thiamine diphosphate contacts are provided by residues His-79 and 120-122 (GHS). Residue Asp-151 participates in Mg(2+) binding. Thiamine diphosphate contacts are provided by residues 152–153 (GS), Asn-180, Tyr-291, and Glu-373. Asn-180 lines the Mg(2+) pocket.

The protein belongs to the transketolase family. DXPS subfamily. In terms of assembly, homodimer. It depends on Mg(2+) as a cofactor. The cofactor is thiamine diphosphate.

The enzyme catalyses D-glyceraldehyde 3-phosphate + pyruvate + H(+) = 1-deoxy-D-xylulose 5-phosphate + CO2. The protein operates within metabolic intermediate biosynthesis; 1-deoxy-D-xylulose 5-phosphate biosynthesis; 1-deoxy-D-xylulose 5-phosphate from D-glyceraldehyde 3-phosphate and pyruvate: step 1/1. Functionally, catalyzes the acyloin condensation reaction between C atoms 2 and 3 of pyruvate and glyceraldehyde 3-phosphate to yield 1-deoxy-D-xylulose-5-phosphate (DXP). In Rhodospirillum rubrum (strain ATCC 11170 / ATH 1.1.1 / DSM 467 / LMG 4362 / NCIMB 8255 / S1), this protein is 1-deoxy-D-xylulose-5-phosphate synthase 1.